The following is a 157-amino-acid chain: Small ribosomal subunit protein uS7cz/uS7cy (157 aa).

Belongs to the universal ribosomal protein uS7 family. In terms of assembly, part of the 30S ribosomal subunit.

It localises to the plastid. It is found in the chloroplast. One of the primary rRNA binding proteins, it binds directly to 16S rRNA where it nucleates assembly of the head domain of the 30S subunit. The sequence is that of Small ribosomal subunit protein uS7cz/uS7cy (rps7-A) from Gnetum parvifolium (Small-leaved jointfir).